The following is a 595-amino-acid chain: MFS-type efflux pump MFS2 (595 aa).

Residue N62 is glycosylated (N-linked (GlcNAc...) asparagine). A run of 12 helical transmembrane segments spans residues 69–89 (WSIT…SSAY), 106–126 (VITL…LIWA), 136–156 (LLFF…AGSP), 166–186 (FFAG…IADM), 197–217 (GIFA…GGFL), 225–245 (WVEG…SIFL), 301–321 (PIVL…YMLF), 336–356 (PGIG…AMVI), 381–401 (LPVA…FAWT), 409–429 (IVSI…FLSL), 442–462 (ASVL…FPLF), and 478–498 (IPAF…IYGA).

The protein belongs to the major facilitator superfamily. DHA1 family. Polyamines/proton antiporter (TC 2.A.1.2.16) subfamily.

It localises to the cell membrane. In terms of biological role, MFS-type efflux pump involved in the modulation susceptibility to fluconazole and voriconazole, 2 azoles with similar molecular structure. The sequence is that of MFS-type efflux pump MFS2 from Trichophyton rubrum (strain ATCC MYA-4607 / CBS 118892) (Athlete's foot fungus).